A 200-amino-acid chain; its full sequence is MKVAIVEYGVGNLNSVYRAVKHLGHEPVVTDDPSELHDADAVILPGVGNFRAAAEKLEETGLCDEIRELLGSVPLLGICLGMQLLMESSEESPESRGLGVFRGTCVALPNDVKTPHMGWNTVEFRTEEFREFDGEMFYFVHSYRVAPEDDVVLGETEYGERFPSVIGDRGRLIYGMQFHPEKSGPVGLKLLGEVLTGASR.

Residues 2–200 (KVAIVEYGVG…LGEVLTGASR (199 aa)) enclose the Glutamine amidotransferase type-1 domain. The Nucleophile role is filled by Cys79. Residues His179 and Glu181 contribute to the active site.

In terms of assembly, heterodimer of HisH and HisF.

Its subcellular location is the cytoplasm. The enzyme catalyses 5-[(5-phospho-1-deoxy-D-ribulos-1-ylimino)methylamino]-1-(5-phospho-beta-D-ribosyl)imidazole-4-carboxamide + L-glutamine = D-erythro-1-(imidazol-4-yl)glycerol 3-phosphate + 5-amino-1-(5-phospho-beta-D-ribosyl)imidazole-4-carboxamide + L-glutamate + H(+). The catalysed reaction is L-glutamine + H2O = L-glutamate + NH4(+). It functions in the pathway amino-acid biosynthesis; L-histidine biosynthesis; L-histidine from 5-phospho-alpha-D-ribose 1-diphosphate: step 5/9. In terms of biological role, IGPS catalyzes the conversion of PRFAR and glutamine to IGP, AICAR and glutamate. The HisH subunit catalyzes the hydrolysis of glutamine to glutamate and ammonia as part of the synthesis of IGP and AICAR. The resulting ammonia molecule is channeled to the active site of HisF. The polypeptide is Imidazole glycerol phosphate synthase subunit HisH (Methanopyrus kandleri (strain AV19 / DSM 6324 / JCM 9639 / NBRC 100938)).